A 479-amino-acid polypeptide reads, in one-letter code: PTS system MurNAc-GlcNAc-specific EIIBC component (479 aa).

Residues 5–87 enclose the PTS EIIB type-1 domain; that stretch reads QILAEHIIDA…SELSGAPLGE (83 aa). Cysteine 27 serves as the catalytic Phosphocysteine intermediate; for EIIB activity. Residues 125–479 form the PTS EIIC type-1 domain; sequence KTIANIFIPL…AMRESDTLGD (355 aa). Helical transmembrane passes span 130–150, 169–189, 195–215, 229–249, 269–289, 303–323, 344–364, 379–399, 403–423, and 445–465; these read IFIPLIPAFIGAGLIGGIAAV, VTVFNVIKDGMLAYLAIFTGI, FGATPGLGGVIGGTTLLTGLT, LQPGQGGIIGVIFAVWLLSII, ITLFIIGLLTIFIFMPLAGFV, IGGVFSGFIIGAFFLPLVMLG, LLPIAAMAGAGQVGAALALWV, ALPVGFLGIGEPLIYGVTLPL, FITACIGGGIGGAVIGGIGHI, and LGYIAGLLVAYAGGFIFTYFF.

It localises to the cell membrane. It carries out the reaction N-acetyl-beta-D-muramate-(1-&gt;4)-N-acetyl-D-glucosamine(out) + N(pros)-phospho-L-histidyl-[protein] = 6-phospho-N-acetyl-beta-D-muramate-(1-&gt;4)-N-acetyl-D-glucosamine(in) + L-histidyl-[protein]. Its pathway is cell wall biogenesis; peptidoglycan recycling. The phosphoenolpyruvate-dependent sugar phosphotransferase system (sugar PTS), a major carbohydrate active transport system, catalyzes the phosphorylation of incoming sugar substrates concomitantly with their translocation across the cell membrane. This system is involved in the uptake and phosphorylation of MurNAc-GlcNAc, the principle peptidoglycan turnover product of S.aureus, yielding cytoplasmic MurNAc 6P-GlcNAc. This Staphylococcus saprophyticus subsp. saprophyticus (strain ATCC 15305 / DSM 20229 / NCIMB 8711 / NCTC 7292 / S-41) protein is PTS system MurNAc-GlcNAc-specific EIIBC component.